The following is a 406-amino-acid chain: Phosphorylase b kinase gamma catalytic chain, liver/testis isoform (406 aa).

The Protein kinase domain occupies 24–291 (YDPKDIIGRG…AEQALQHPFF (268 aa)). ATP is bound by residues 30 to 38 (IGRGVSSVV) and lysine 53. Aspartate 153 acts as the Proton acceptor in catalysis. The interval 306–330 (QRFRVAVWTILAAGRVALSSHRLRP) is calmodulin-binding (domain-N). Residues 346 to 370 (VRRLIDNCAFRLYGHWVKKGEQQNR) are calmodulin-binding (domain-C).

The protein belongs to the protein kinase superfamily. CAMK Ser/Thr protein kinase family. Hexadecamer of 4 heterotetramers, each composed of alpha, beta, gamma, and delta subunits. Alpha (PHKA1 or PHKA2) and beta (PHKB) are regulatory subunits, gamma (PHKG1 or PHKG2) is the catalytic subunit, and delta is calmodulin.

The catalysed reaction is 2 ATP + phosphorylase b = 2 ADP + phosphorylase a.. Its function is as follows. Catalytic subunit of the phosphorylase b kinase (PHK), which mediates the neural and hormonal regulation of glycogen breakdown (glycogenolysis) by phosphorylating and thereby activating glycogen phosphorylase. May regulate glycogeneolysis in the testis. In vitro, phosphorylates PYGM. This is Phosphorylase b kinase gamma catalytic chain, liver/testis isoform (Phkg2) from Rattus norvegicus (Rat).